Consider the following 212-residue polypeptide: Molybdenum cofactor guanylyltransferase (212 aa).

Residues 14-16 (LAG), lysine 27, asparagine 55, aspartate 73, and aspartate 108 each bind GTP. Aspartate 108 is a binding site for Mg(2+).

This sequence belongs to the MobA family. Monomer. It depends on Mg(2+) as a cofactor.

The protein localises to the cytoplasm. It carries out the reaction Mo-molybdopterin + GTP + H(+) = Mo-molybdopterin guanine dinucleotide + diphosphate. Its function is as follows. Transfers a GMP moiety from GTP to Mo-molybdopterin (Mo-MPT) cofactor (Moco or molybdenum cofactor) to form Mo-molybdopterin guanine dinucleotide (Mo-MGD) cofactor. This is Molybdenum cofactor guanylyltransferase from Bradyrhizobium sp. (strain ORS 278).